Reading from the N-terminus, the 63-residue chain is U-reduvitoxin-Pr4a (63 aa).

Positions Met-1–Ala-19 are cleaved as a signal peptide. Intrachain disulfides connect Cys-24/Cys-40, Cys-31/Cys-45, and Cys-39/Cys-52.

This sequence belongs to the venom Ptu1-like knottin family. As to expression, expressed by the venom gland.

The protein resides in the secreted. Functionally, binds reversibly and blocks P/Q-type voltage-gated calcium channels (Cav). The polypeptide is U-reduvitoxin-Pr4a (Platymeris rhadamanthus (Red spot assassin bug)).